The sequence spans 38 residues: Photosystem II reaction center protein L (38 aa).

The helical transmembrane segment at 17–37 (SLFWGLLLIFVLAILFSSYIF) threads the bilayer.

Belongs to the PsbL family. In terms of assembly, PSII is composed of 1 copy each of membrane proteins PsbA, PsbB, PsbC, PsbD, PsbE, PsbF, PsbH, PsbI, PsbJ, PsbK, PsbL, PsbM, PsbT, PsbX, PsbY, PsbZ, Psb30/Ycf12, at least 3 peripheral proteins of the oxygen-evolving complex and a large number of cofactors. It forms dimeric complexes.

The protein resides in the plastid. The protein localises to the cyanelle thylakoid membrane. One of the components of the core complex of photosystem II (PSII). PSII is a light-driven water:plastoquinone oxidoreductase that uses light energy to abstract electrons from H(2)O, generating O(2) and a proton gradient subsequently used for ATP formation. It consists of a core antenna complex that captures photons, and an electron transfer chain that converts photonic excitation into a charge separation. This subunit is found at the monomer-monomer interface and is required for correct PSII assembly and/or dimerization. This chain is Photosystem II reaction center protein L, found in Cyanophora paradoxa.